Reading from the N-terminus, the 321-residue chain is Solute carrier family 25 member 33 (321 aa).

3 Solcar repeats span residues 9-118 (ENTL…AKEQ), 126-213 (NSNI…LKKY), and 231-315 (TNFF…IVYL). Transmembrane regions (helical) follow at residues 12–32 (LLHL…TCPL), 49–65 (VYYP…AGVV), 121–141 (GVFV…AAFV), 190–210 (LTAS…YESL), 233–253 (FFGL…VAYP), and 298–318 (QIPN…LLED).

The protein belongs to the mitochondrial carrier (TC 2.A.29) family.

Its subcellular location is the mitochondrion inner membrane. The enzyme catalyses UTP(in) + UDP(out) = UTP(out) + UDP(in). It catalyses the reaction dUTP(out) + UTP(in) = dUTP(in) + UTP(out). It carries out the reaction 5-methyl-UTP(out) + UTP(in) = 5-methyl-UTP(in) + UTP(out). The catalysed reaction is 5-methyl-UDP(out) + UTP(in) = 5-methyl-UDP(in) + UTP(out). The enzyme catalyses UTP(in) + CTP(out) = UTP(out) + CTP(in). It catalyses the reaction CDP(out) + UTP(in) = CDP(in) + UTP(out). It carries out the reaction dCTP(out) + UTP(in) = dCTP(in) + UTP(out). The catalysed reaction is dCDP(out) + UTP(in) = dCDP(in) + UTP(out). The enzyme catalyses UTP(in) + GTP(out) = UTP(out) + GTP(in). It catalyses the reaction UTP(in) + GDP(out) = UTP(out) + GDP(in). It carries out the reaction dGTP(out) + UTP(in) = dGTP(in) + UTP(out). The catalysed reaction is dGDP(out) + UTP(in) = dGDP(in) + UTP(out). The enzyme catalyses ITP(out) + UTP(in) = ITP(in) + UTP(out). Mitochondrial transporter that imports/exports pyrimidine nucleotides into and from mitochondria. Selectively transports uridine, thymidine, guanosine, cytosine and inosine (deoxy)nucleoside di- and triphosphates by an antiport mechanism. May import (deoxy)nucleoside triphosphates in exchange for intramitochondrial (deoxy)nucleoside diphosphates, thus providing precursors necessary for de novo synthesis of mitochondrial DNA and RNA while exporting products of their catabolism. Participates in mitochondrial genome maintenance, regulation of mitochondrial membrane potential and mitochondrial respiration. Upon INS or IGF1 stimulation regulates cell growth and proliferation by controlling mitochondrial DNA replication and transcription, the ratio of mitochondria-to nuclear-encoded components of the electron transport chain resulting in control of mitochondrial ROS production. Participates in dendritic cell endocytosis and may associate with mitochondrial oxidative phosphorylation. The polypeptide is Solute carrier family 25 member 33 (SLC25A33) (Bos taurus (Bovine)).